The chain runs to 195 residues: Dephospho-CoA kinase (195 aa).

The 193-residue stretch at 3–195 folds into the DPCK domain; sequence IIGLTGSIAM…FSIIENLLKN (193 aa). 11-16 contributes to the ATP binding site; the sequence is AMGKST.

The protein belongs to the CoaE family.

The protein resides in the cytoplasm. The catalysed reaction is 3'-dephospho-CoA + ATP = ADP + CoA + H(+). It functions in the pathway cofactor biosynthesis; coenzyme A biosynthesis; CoA from (R)-pantothenate: step 5/5. Functionally, catalyzes the phosphorylation of the 3'-hydroxyl group of dephosphocoenzyme A to form coenzyme A. This is Dephospho-CoA kinase from Bartonella quintana (strain Toulouse) (Rochalimaea quintana).